A 192-amino-acid polypeptide reads, in one-letter code: Ribosomal RNA large subunit methyltransferase E (192 aa).

The S-adenosyl-L-methionine site is built by G48, F50, D67, D85, and D107. K147 acts as the Proton acceptor in catalysis.

Belongs to the class I-like SAM-binding methyltransferase superfamily. RNA methyltransferase RlmE family.

The protein localises to the cytoplasm. The catalysed reaction is uridine(2552) in 23S rRNA + S-adenosyl-L-methionine = 2'-O-methyluridine(2552) in 23S rRNA + S-adenosyl-L-homocysteine + H(+). Its function is as follows. Specifically methylates the uridine in position 2552 of 23S rRNA at the 2'-O position of the ribose in the fully assembled 50S ribosomal subunit. The sequence is that of Ribosomal RNA large subunit methyltransferase E from Borrelia garinii subsp. bavariensis (strain ATCC BAA-2496 / DSM 23469 / PBi) (Borreliella bavariensis).